The sequence spans 221 residues: Glutathione S-transferase alpha-5 (221 aa).

The GST N-terminal domain occupies 3–83 (GKPVLHYFDG…YIATKYNLYG (81 aa)). At Lys-4 the chain carries N6-succinyllysine. Glutathione is bound by residues Tyr-9, Arg-45, 54–55 (QV), and 67–68 (QT). The 123-residue stretch at 85 to 207 (DMKERALIDM…LQPGSQRKPF (123 aa)) folds into the GST C-terminal domain.

Belongs to the GST superfamily. Alpha family. Heterodimer of YC1 and YC2. In terms of tissue distribution, liver, nasal mucosa and epididymis.

Its subcellular location is the cytoplasm. It catalyses the reaction RX + glutathione = an S-substituted glutathione + a halide anion + H(+). Conjugation of reduced glutathione to a wide number of exogenous and endogenous hydrophobic electrophiles. Has substantial activity toward aflatoxin B1-8,9-epoxide. The sequence is that of Glutathione S-transferase alpha-5 (Gsta5) from Rattus norvegicus (Rat).